Consider the following 447-residue polypeptide: UDP-glycosyltransferase 79B10 (447 aa).

Residues S260, 319–321, 336–344, and 358–361 contribute to the UDP-alpha-D-glucose site; these read VQQ, HCGFGSMWE, and LADQ.

Belongs to the UDP-glycosyltransferase family.

This is UDP-glycosyltransferase 79B10 (UGT79B10) from Arabidopsis thaliana (Mouse-ear cress).